A 188-amino-acid chain; its full sequence is Elongation factor P (188 aa).

It belongs to the elongation factor P family.

It localises to the cytoplasm. It participates in protein biosynthesis; polypeptide chain elongation. Functionally, involved in peptide bond synthesis. Stimulates efficient translation and peptide-bond synthesis on native or reconstituted 70S ribosomes in vitro. Probably functions indirectly by altering the affinity of the ribosome for aminoacyl-tRNA, thus increasing their reactivity as acceptors for peptidyl transferase. The protein is Elongation factor P of Azotobacter vinelandii (strain DJ / ATCC BAA-1303).